Here is a 293-residue protein sequence, read N- to C-terminus: MFNFFKKIVNKIKGEEAKEKKRQSVPKEELEEILIGFDIQYDLIESLLKHLGDLITPKQLEVALLRFVRGDSYYDKTRLKTITTKPLVHLIVGVNGAGKTTTIAKLAKLSLKQHKKALLGAGDTFRAAAVKQLQLWGEKLNIQVISAKEGSDPSSLAYNTIESAIAKNIDEVFIDTAGRLHNQTNLKNELSKIARTCSKVLKDAPFYKFLILDGTQGSSGLTQAKIFHETLALDGVIMTKLDGTSKGGAILSVLYELKLPILYLGMGEKEDDLIAFDEERFIEDLVDAVFVGQ.

GTP contacts are provided by residues 93-100 (GVNGAGKT), 175-179 (DTAGR), and 239-242 (TKLD).

This sequence belongs to the GTP-binding SRP family. FtsY subfamily. Part of the signal recognition particle protein translocation system, which is composed of SRP and FtsY. SRP is a ribonucleoprotein composed of Ffh and a 4.5S RNA molecule.

Its subcellular location is the cell inner membrane. The protein localises to the cytoplasm. The enzyme catalyses GTP + H2O = GDP + phosphate + H(+). Involved in targeting and insertion of nascent membrane proteins into the cytoplasmic membrane. Acts as a receptor for the complex formed by the signal recognition particle (SRP) and the ribosome-nascent chain (RNC). Interaction with SRP-RNC leads to the transfer of the RNC complex to the Sec translocase for insertion into the membrane, the hydrolysis of GTP by both Ffh and FtsY, and the dissociation of the SRP-FtsY complex into the individual components. In Helicobacter pylori (strain ATCC 700392 / 26695) (Campylobacter pylori), this protein is Signal recognition particle receptor FtsY.